Consider the following 598-residue polypeptide: DNA primase (598 aa).

The segment at 38–62 (CPFHDEKTPSFTVSEDKQICHCFGC) adopts a CHC2-type zinc-finger fold. The Toprim domain maps to 260–341 (DEIILLEGFM…NVYVVQLPSG (82 aa)). Positions 266, 310, and 312 each coordinate Mg(2+).

The protein belongs to the DnaG primase family. As to quaternary structure, monomer. Interacts with DnaB. Zn(2+) serves as cofactor. Requires Mg(2+) as cofactor.

The enzyme catalyses ssDNA + n NTP = ssDNA/pppN(pN)n-1 hybrid + (n-1) diphosphate.. In terms of biological role, RNA polymerase that catalyzes the synthesis of short RNA molecules used as primers for DNA polymerase during DNA replication. This Staphylococcus epidermidis (strain ATCC 12228 / FDA PCI 1200) protein is DNA primase.